Reading from the N-terminus, the 31-residue chain is Cytochrome b6-f complex subunit 6 (31 aa).

The helical transmembrane segment at 4–24 (VISYLSLLFISFLFALTLFIV) threads the bilayer.

The protein belongs to the PetL family. As to quaternary structure, the 4 large subunits of the cytochrome b6-f complex are cytochrome b6, subunit IV (17 kDa polypeptide, PetD), cytochrome f and the Rieske protein, while the 4 small subunits are PetG, PetL, PetM and PetN. The complex functions as a dimer.

It localises to the plastid. Its subcellular location is the chloroplast thylakoid membrane. In terms of biological role, component of the cytochrome b6-f complex, which mediates electron transfer between photosystem II (PSII) and photosystem I (PSI), cyclic electron flow around PSI, and state transitions. PetL is important for photoautotrophic growth as well as for electron transfer efficiency and stability of the cytochrome b6-f complex. The polypeptide is Cytochrome b6-f complex subunit 6 (Chara vulgaris (Common stonewort)).